A 768-amino-acid chain; its full sequence is Cullin-3 (768 aa).

Ser-2 is modified (N-acetylserine). Residues 2–41 are interaction with KLHL18; the sequence is SNLSKGTGSRKDTKMRIRAFPMTMDEKYVNSIWDLLKNAI. The residue at position 585 (Ser-585) is a Phosphoserine. Residues 677–698 form a disordered region; sequence VAAKQGESDPERKETRQKVDDD. The segment covering 682-698 has biased composition (basic and acidic residues); sequence GESDPERKETRQKVDDD. One can recognise a Cullin neddylation domain in the interval 698 to 760; the sequence is DRKHEIEAAI…REYLARTPED (63 aa). Lys-712 participates in a covalent cross-link: Glycyl lysine isopeptide (Lys-Gly) (interchain with G-Cter in NEDD8).

Belongs to the cullin family. As to quaternary structure, forms neddylation-dependent homodimers. Component of multiple BCR (BTB-CUL3-RBX1) E3 ubiquitin-protein ligase complexes formed of CUL3, RBX1 and a variable BTB domain-containing protein acting as both, adapter to cullin and substrate recognition subunit. The BCR complex may be active as a heterodimeric complex, in which NEDD8, covalently attached to one CUL3 molecule, binds to the C-terminus of a second CUL3 molecule. Interacts with RBX1, RNF7 and TIP120A/CAND1. Part of the BCR(SPOP) containing SPOP, and of BCR containing homodimeric SPOPL or the heterodimer formed by SPOP and SPOPL. Part of the probable BCR(KLHL9-KLHL13) complex with BTB domain proteins KLHL9 and KLHL13. Part of the BCR(KLHL41) complex containing KLHL41. Component of the BCR(KLHL12) E3 ubiquitin ligase complex, at least composed of CUL3 and KLHL12 and RBX1. Component of the BCR(KLHL3) E3 ubiquitin ligase complex, at least composed of CUL3 and KLHL3 and RBX1. Part of the BCR(ENC1) complex containing ENC1. Part of a complex consisting of BMI1/PCGF4, CUL3 and SPOP. Part of a complex consisting of BRMS1, CUL3 and SPOP. Component of the BCR(KLHL21) E3 ubiquitin ligase complex, at least composed of CUL3, KLHL21 and RBX1. Component of the BCR(KLHL22) E3 ubiquitin ligase complex, at least composed of CUL3, KLHL22 and RBX1. Component of the BCR(KLHL25) E3 ubiquitin ligase complex, at least composed of CUL3, KLHL25 and RBX1. Part of a complex consisting of MACROH2A1, CUL3 and SPOP. Component of the BCR(KLHL42) E3 ubiquitin ligase complex, at least composed of CUL3 and KLHL42. Component of the BCR(KBTBD8) E3 ubiquitin ligase complex, at least composed of CUL3, KBTBD8 and RBX1. Interacts with KLHL42 (via the BTB domain). Interacts with KATNA1; the interaction is enhanced by KLHL42. Interacts with KCTD5, KLHL9, KLHL11, KLHL13, GAN, ZBTB16, KLHL3, KLHL15, KLHL20, KLHL36, GMCL2, BTBD1. Part of a complex that contains CUL3, RBX1 and GAN. Interacts (via BTB domain) with KLHL17; the interaction regulates surface GRIK2 expression. Interacts with KCTD7. Part of the BCR(GAN) complex containing GAN. Part of the BCR(KEAP1) complex containing KEAP1. Interacts with KAT5 and ATF2. Interacts with KCTD17 in the BCR(KCTD17) E3 ubiquitin ligase complex, at least composed of CUL3, KCTD17 and RBX1. Interacts (when neddylated) with ARIH1; leading to activate the E3 ligase activity of ARIH1. Interacts with COPS9. Interacts with PPP2R5B; this interaction is indirect and mediated through KLHL15-binding and leads to PPP2R5B proteasomal degradation. Interacts with RBBP8/CtIP; this interaction is indirect and mediated through KLHL15-binding and leads to RBBP8 proteasomal degradation. Interacts with KLHL24 in the BCR(KLHL24) E3 ubiquitin ligase complex, composed of CUL3, RBX1 and KLHL24. Interacts with RHOBTB2. Interacts with CYCE. Interacts with KLHL10. Interacts with AURKA and KLHL18 (via BTB domain). Interacts (unneddylated form) with DCUN1D1, DCUN1D2, DCUN1D3, DCUN1D4 and DCUN1D5; these interactions promote the cullin neddylation. Component of a BCR3 (BTB-CUL3-RBX1) E3 ubiquitin ligase complex, also named Cul3-RING ubiquitin ligase complex CUL3(KBTBD6/7), composed of CUL3, RBX1, KBTBD6 and KBTBD7. Component of the BCR(KBTBD2) E3 ubiquitin ligase complex, at least composed of CUL3, KBTBD2 and RBX1. Interacts with KBTBD2 (via the BTB domain). Component of the BCR(KBTBD4) E3 ubiquitin ligase complex, at least composed of CUL3, KBTBD4 and RBX1. In terms of processing, neddylated. Attachment of NEDD8 is required for the E3 ubiquitin-protein ligase activity of the BCR complex. Deneddylated via its interaction with the COP9 signalosome (CSN) complex. As to expression, widely expressed, with highest expression in brain, spleen and testis. In the testis, it is mainly expressed in spermatids.

The protein localises to the nucleus. It localises to the golgi apparatus. The protein resides in the cell projection. It is found in the cilium. Its subcellular location is the flagellum. The protein localises to the cytoplasm. It localises to the cytoskeleton. The protein resides in the spindle. It is found in the microtubule organizing center. Its subcellular location is the centrosome. The protein localises to the spindle pole. The protein operates within protein modification; protein ubiquitination. Its function is as follows. Core component of multiple cullin-RING-based BCR (BTB-CUL3-RBX1) E3 ubiquitin-protein ligase complexes which mediate the ubiquitination and subsequent proteasomal degradation of target proteins. BCR complexes and ARIH1 collaborate in tandem to mediate ubiquitination of target proteins. As a scaffold protein may contribute to catalysis through positioning of the substrate and the ubiquitin-conjugating enzyme. The E3 ubiquitin-protein ligase activity of the complex is dependent on the neddylation of the cullin subunit and is inhibited by the association of the deneddylated cullin subunit with TIP120A/CAND1. The functional specificity of the BCR complex depends on the BTB domain-containing protein as the substrate recognition component. BCR(KLHL42) is involved in ubiquitination of KATNA1. BCR(SPOP) is involved in ubiquitination of BMI1/PCGF4, BRMS1, MACROH2A1 and DAXX, GLI2 and GLI3. Can also form a cullin-RING-based BCR (BTB-CUL3-RBX1) E3 ubiquitin-protein ligase complex containing homodimeric SPOPL or the heterodimer formed by SPOP and SPOPL; these complexes have lower ubiquitin ligase activity. BCR(KLHL9-KLHL13) controls the dynamic behavior of AURKB on mitotic chromosomes and thereby coordinates faithful mitotic progression and completion of cytokinesis. BCR(KLHL12) is involved in ER-Golgi transport by regulating the size of COPII coats, thereby playing a key role in collagen export, which is required for embryonic stem (ES) cells division: BCR(KLHL12) acts by mediating monoubiquitination of SEC31 (SEC31A or SEC31B). BCR(KLHL3) acts as a regulator of ion transport in the distal nephron; by mediating ubiquitination of WNK4. The BCR(KLHL20) E3 ubiquitin ligase complex is involved in interferon response and anterograde Golgi to endosome transport: it mediates both ubiquitination leading to degradation and 'Lys-33'-linked ubiquitination. The BCR(KLHL21) E3 ubiquitin ligase complex regulates localization of the chromosomal passenger complex (CPC) from chromosomes to the spindle midzone in anaphase and mediates the ubiquitination of AURKB. The BCR(KLHL22) ubiquitin ligase complex mediates monoubiquitination of PLK1, leading to PLK1 dissociation from phosphoreceptor proteins and subsequent removal from kinetochores, allowing silencing of the spindle assembly checkpoint (SAC) and chromosome segregation. The BCR(KLHL22) ubiquitin ligase complex is also responsible for the amino acid-stimulated 'Lys-48' polyubiquitination and proteasomal degradation of DEPDC5. Through the degradation of DEPDC5, releases the GATOR1 complex-mediated inhibition of the TORC1 pathway. The BCR(KLHL25) ubiquitin ligase complex is involved in translational homeostasis by mediating ubiquitination and subsequent degradation of hypophosphorylated EIF4EBP1 (4E-BP1). The BCR(KLHL25) ubiquitin ligase complex is also involved in lipid synthesis by mediating ubiquitination and degradation of ACLY. The BCR(KBTBD8) complex acts by mediating monoubiquitination of NOLC1 and TCOF1, leading to remodel the translational program of differentiating cells in favor of neural crest specification. Involved in ubiquitination of cyclin E and of cyclin D1 (in vitro) thus involved in regulation of G1/S transition. Involved in the ubiquitination of KEAP1, ENC1 and KLHL41. In concert with ATF2 and RBX1, promotes degradation of KAT5 thereby attenuating its ability to acetylate and activate ATM. The BCR(KCTD17) E3 ubiquitin ligase complex mediates ubiquitination and degradation of TCHP, a down-regulator of cilium assembly, thereby inducing ciliogenesis. The BCR(KLHL24) E3 ubiquitin ligase complex mediates ubiquitination of KRT14, controls KRT14 levels during keratinocytes differentiation, and is essential for skin integrity. The BCR(KLHL18) E3 ubiquitin ligase complex mediates the ubiquitination of AURKA leading to its activation at the centrosome which is required for initiating mitotic entry. The BCR(KEAP1) E3 ubiquitin ligase complex acts as a key sensor of oxidative and electrophilic stress by mediating ubiquitination and degradation of NFE2L2/NRF2, a transcription factor regulating expression of many cytoprotective genes. As part of the CUL3(KBTBD6/7) E3 ubiquitin ligase complex functions mediates 'Lys-48' ubiquitination and proteasomal degradation of TIAM1. By controlling the ubiquitination of that RAC1 guanine exchange factors (GEF), regulates RAC1 signal transduction and downstream biological processes including the organization of the cytoskeleton, cell migration and cell proliferation. The BCR(KBTBD4) E3 ubiquitin ligase complex targets CoREST corepressor complex components RCOR1, KDM1A/LSD1 and HDAC2 for proteasomal degradation with RCOR1 likely to be the primary target while degradation of KDM1A and HDAC2 is likely due to their association with RCOR1. It also targets RCOR3, MIER2 and MIER3 for proteasomal degradation as well as associated proteins ZNF217 and RREB1 with degradation being dependent on the presence of an ELM2 domain in the target proteins. The BCR(ARMC5) complex mediates premature transcription termination of transcripts that are unfavorably configured for transcriptional elongation by mediating ubiquitination of Pol II subunit POLR2A. Required for 'Lys-63'-linked ubiquitination of large ribosomal subunit protein MRPL12. The chain is Cullin-3 (Cul3) from Mus musculus (Mouse).